Here is a 371-residue protein sequence, read N- to C-terminus: Flagellar P-ring protein (371 aa).

The signal sequence occupies residues 1 to 24; it reads MSIRVLLFSIFTGFLLAAAGPALA. A compositionally biased stretch (polar residues) spans 301–321; that stretch reads PQPFSSGTTATQPQTDISAQK. The segment at 301–322 is disordered; it reads PQPFSSGTTATQPQTDISAQKT.

This sequence belongs to the FlgI family. As to quaternary structure, the basal body constitutes a major portion of the flagellar organelle and consists of four rings (L,P,S, and M) mounted on a central rod.

It localises to the periplasm. The protein localises to the bacterial flagellum basal body. Its function is as follows. Assembles around the rod to form the L-ring and probably protects the motor/basal body from shearing forces during rotation. This chain is Flagellar P-ring protein, found in Allorhizobium ampelinum (strain ATCC BAA-846 / DSM 112012 / S4) (Agrobacterium vitis (strain S4)).